Reading from the N-terminus, the 214-residue chain is Histone H1.1 (214 aa).

The segment at 1–43 is disordered; the sequence is MSETAPVPQPASVAPEKPAATKKTRKPAKAAVPRKKPAGPSVS. S2 is subject to N-acetylserine. S2 and S12 each carry phosphoserine. Position 17 is an N6-acetyllysine (K17). Residues 20–37 show a composition bias toward basic residues; it reads ATKKTRKPAKAAVPRKKP. An N6-(beta-hydroxybutyryl)lysine modification is found at K36. The H15 domain occupies 38-111; the sequence is AGPSVSELIV…GAAGSFKLNK (74 aa). S43 bears the Phosphoserine mark. The residue at position 54 (K54) is an N6-(beta-hydroxybutyryl)lysine. The residue at position 56 (R56) is a Citrulline. K66 is modified (N6-(beta-hydroxybutyryl)lysine). A Phosphoserine modification is found at S67. K77 is subject to N6-acetyllysine. K87 is modified (N6-(beta-hydroxybutyryl)lysine). K92 is subject to N6-(beta-hydroxybutyryl)lysine; alternate. An N6-acetyllysine; alternate modification is found at K92. The tract at residues 93-214 is disordered; that stretch reads GTLVQTKGTG…KPKKAAPKKK (122 aa). S106 carries the post-translational modification Phosphoserine. The residue at position 108 (K108) is an N6-(beta-hydroxybutyryl)lysine. The segment covering 116-144 has biased composition (low complexity); sequence KASTTKVTVKAKASGAAKKPKKTAGAAAK. K121 bears the N6-acetyllysine mark. Composition is skewed to basic residues over residues 145–179 and 186–214; these read KTVK…KKVA and KAVK…PKKK. T202 carries the phosphothreonine modification.

It belongs to the histone H1/H5 family. In terms of assembly, interacts with DFFB. In terms of processing, H1 histones are progressively phosphorylated during the cell cycle, becoming maximally phosphorylated during late G2 phase and M phase, and being dephosphorylated sharply thereafter. Citrullination at Arg-56 (H1R54ci) by PADI4 takes place within the DNA-binding site of H1 and results in its displacement from chromatin and global chromatin decondensation, thereby promoting pluripotency and stem cell maintenance.

Its subcellular location is the nucleus. The protein resides in the chromosome. Functionally, H1 histones bind to linker DNA between nucleosomes forming the macromolecular structure known as the chromatin fiber. H1 histones are necessary for the condensation of nucleosome chains into higher-order structured fibers. Also acts as a regulator of individual gene transcription through chromatin remodeling. The polypeptide is Histone H1.1 (Rattus norvegicus (Rat)).